A 380-amino-acid polypeptide reads, in one-letter code: Alpha-N-acetylneuraminate alpha-2,8-sialyltransferase ST8SIA3 (380 aa).

The Cytoplasmic segment spans residues 1–9; sequence MRNCKMARV. The helical; Signal-anchor for type II membrane protein transmembrane segment at 10–33 threads the bilayer; sequence ASVLGLVMLSVALLILSLISYVSL. Over 34–380 the chain is Lumenal; that stretch reads KKENIFTTPK…LTKLTLSHCA (347 aa). N-linked (GlcNAc...) asparagine glycans are attached at residues Asn93, Asn113, and Asn160. Intrachain disulfides connect Cys162–Cys313 and Cys176–Cys379. Residues Asn167 and Asn190 each contribute to the CMP-N-acetyl-beta-neuraminate site. Asn206 is a glycosylation site (N-linked (GlcNAc...) asparagine). CMP-N-acetyl-beta-neuraminate is bound by residues Ser300, Thr301, Gly302, Trp322, Tyr336, and His337. The Proton donor/acceptor role is filled by His354.

It belongs to the glycosyltransferase 29 family. In terms of assembly, homodimer. In terms of processing, autopolysialylated. In terms of tissue distribution, expressed in fetal and adult brain and fetal liver.

It is found in the golgi apparatus membrane. The catalysed reaction is [N-acetyl-alpha-D-neuraminosyl-(2-&gt;8)](n) + CMP-N-acetyl-beta-neuraminate = [N-acetyl-alpha-D-neuraminosyl-(2-&gt;8)](n+1) + CMP + H(+). It carries out the reaction alpha-Neu5Ac-(2-&gt;3)-beta-D-Gal-(1-&gt;4)-6S-D-GlcNAc + CMP-N-acetyl-beta-neuraminate = alpha-Neu5Ac-(2-&gt;8)-alpha-Neu5Ac-(2-&gt;3)-beta-D-Gal-(1-&gt;4)-6S-D-GlcNAc + CMP + H(+). The enzyme catalyses a ganglioside GM3 (d18:1(4E)) + CMP-N-acetyl-beta-neuraminate = a ganglioside GD3 (d18:1(4E)) + CMP + H(+). It catalyses the reaction a ganglioside GM3 + CMP-N-acetyl-beta-neuraminate = a ganglioside GD3 + CMP + H(+). The catalysed reaction is an N-acetyl-alpha-neuraminyl-(2-&gt;3)-beta-D-galactosyl derivative + CMP-N-acetyl-beta-neuraminate = an N-acetyl-alpha-neuraminyl-(2-&gt;8)-N-acetyl-alpha-neuraminyl-(2-&gt;3)-beta-D-galactosyl derivative + CMP + H(+). It carries out the reaction an N-acetyl-alpha-neuraminyl-(2-&gt;3)-beta-D-galactosyl-(1-&gt;4)-N-acetyl-beta-D-glucosaminyl derivative + CMP-N-acetyl-beta-neuraminate = an alpha-Neu5Ac-(2-&gt;8)-alpha-Neu5Ac-(2-&gt;3)-beta-D-Gal-(1-&gt;4)-beta-D-GlcNAc derivative + CMP + H(+). It functions in the pathway protein modification; protein glycosylation. Its function is as follows. Catalyzes the transfer of sialic acid from a CMP-linked sialic acid donor onto a terminal alpha-2,3-, alpha-2,6-, or alpha-2,8-linked sialic acid of an acceptor, such as N-linked oligosaccharides of glycoproteins and glycolipids through alpha-2,8-linkages. Forms oligosialic and polysialic acid on various sialylated N-acetyllactosamine oligosaccharides of glycoproteins, including FETUB N-glycans, a2-HS-glycoprotein (AHSG) and alpha 2,3-sialylated glycosphingolipids, such as alpha 2,3-sialylparagloboside and ganglioside GM3 and to a lesser extent NCAM1 N-glycans. However, it is much more specific to N-linked oligosaccharides of glycoproteins than glycosphingolipids. 2,3-sialylparagloboside serves as the best acceptor substrate among the glycolipids. alpha-Neu5Ac-(2-&gt;8)-alpha-Neu5Ac-(2-&gt;3)-beta-D-Gal-(1-&gt;4)-6S-D-GlcNAc and monosialyl and disialyl N-acetyllactosamines are the best acceptor substrates among glycoproteins. May plays critical role in the striatum by mediating the formation of disialylated and trisialylated terminal glycotopes on N- and O-glycans of specific striatal proteins, regulating their distribution in lipid rafts, affecting their interaction with other binding partners, and subsequently modulating striatal functions. In Homo sapiens (Human), this protein is Alpha-N-acetylneuraminate alpha-2,8-sialyltransferase ST8SIA3.